A 552-amino-acid chain; its full sequence is Dihydroxy-acid dehydratase (552 aa).

D78 contributes to the Mg(2+) binding site. C119 contacts [2Fe-2S] cluster. Residues D120 and K121 each contribute to the Mg(2+) site. K121 carries the N6-carboxylysine modification. Residue C191 participates in [2Fe-2S] cluster binding. Residue E442 participates in Mg(2+) binding. S468 serves as the catalytic Proton acceptor.

Belongs to the IlvD/Edd family. Homodimer. [2Fe-2S] cluster serves as cofactor. The cofactor is Mg(2+).

It catalyses the reaction (2R)-2,3-dihydroxy-3-methylbutanoate = 3-methyl-2-oxobutanoate + H2O. It carries out the reaction (2R,3R)-2,3-dihydroxy-3-methylpentanoate = (S)-3-methyl-2-oxopentanoate + H2O. The protein operates within amino-acid biosynthesis; L-isoleucine biosynthesis; L-isoleucine from 2-oxobutanoate: step 3/4. It participates in amino-acid biosynthesis; L-valine biosynthesis; L-valine from pyruvate: step 3/4. Functionally, functions in the biosynthesis of branched-chain amino acids. Catalyzes the dehydration of (2R,3R)-2,3-dihydroxy-3-methylpentanoate (2,3-dihydroxy-3-methylvalerate) into 2-oxo-3-methylpentanoate (2-oxo-3-methylvalerate) and of (2R)-2,3-dihydroxy-3-methylbutanoate (2,3-dihydroxyisovalerate) into 2-oxo-3-methylbutanoate (2-oxoisovalerate), the penultimate precursor to L-isoleucine and L-valine, respectively. The polypeptide is Dihydroxy-acid dehydratase (Moorella thermoacetica (strain ATCC 39073 / JCM 9320)).